The sequence spans 155 residues: uncharacterized protein (155 aa).

Residues 1–23 (MKIRSLSRFVLASTMFASFTASA) form the signal peptide.

It to E.coli YkfB.

This is an uncharacterized protein from Escherichia coli (strain K12).